The chain runs to 573 residues: Septation ring formation regulator EzrA (573 aa).

At 1 to 2 (MQ) the chain is on the extracellular side. The helical transmembrane segment at 3–21 (VAIGIVVVAIVIYAAVKGF) threads the bilayer. Over 22–573 (QFYIDKQVRQ…KQADKMNDEA (552 aa)) the chain is Cytoplasmic. Coiled-coil stretches lie at residues 100–188 (DAQQ…LAKA), 317–364 (LTHA…VYQA), and 416–488 (ETLQ…TLKE).

The protein belongs to the EzrA family.

Its subcellular location is the cell membrane. Functionally, negative regulator of FtsZ ring formation; modulates the frequency and position of FtsZ ring formation. Inhibits FtsZ ring formation at polar sites. Interacts either with FtsZ or with one of its binding partners to promote depolymerization. This chain is Septation ring formation regulator EzrA, found in Lactiplantibacillus plantarum (strain ATCC BAA-793 / NCIMB 8826 / WCFS1) (Lactobacillus plantarum).